A 453-amino-acid chain; its full sequence is AP-4 complex subunit mu-1 (453 aa).

The MHD domain occupies K184 to R452. The tract at residues P383–G403 is disordered.

It belongs to the adaptor complexes medium subunit family. As to quaternary structure, adaptor protein complex 4 (AP-4) is a heterotetramer composed of two large adaptins (epsilon-type subunit AP4E1 and beta-type subunit AP4B1), a medium adaptin (mu-type subunit AP4M1) and a small adaptin (sigma-type AP4S1). Interacts with tyrosine-based sorting signals on the cytoplasmic tail of cargo proteins such as APP, ATG9A, LAMP2 and NAGPA. Interacts with the C-terminal domain of GRID2. Interacts with GRIA1 and GRIA2; the interaction is indirect via CACNG3. Interacts with CACNG3; CACNG3 associates GRIA1 and GRIA2 with the adaptor protein complex 4 (AP-4) to target them to the somatodendritic compartment of neurons. Interacts with HOOK1 and HOOK2; the interactions are direct, mediate the interaction between FTS-Hook-FHIP (FHF) complex and AP-4 and the perinuclear distribution of AP-4. As to expression, high levels in the olfactory bulb, the cerebral cortex, the granule and Purkinje cell layers of the cerebellar cortex and the CA3 region of the hippocampus. Low levels found in molecular layer of cerebellum.

It localises to the golgi apparatus. The protein localises to the trans-Golgi network membrane. It is found in the early endosome. Component of the adaptor protein complex 4 (AP-4). Adaptor protein complexes are vesicle coat components involved both in vesicle formation and cargo selection. They control the vesicular transport of proteins in different trafficking pathways. AP-4 forms a non clathrin-associated coat on vesicles departing the trans-Golgi network (TGN) and may be involved in the targeting of proteins from the trans-Golgi network (TGN) to the endosomal-lysosomal system. It is also involved in protein sorting to the basolateral membrane in epithelial cells and the proper asymmetric localization of somatodendritic proteins in neurons. Within AP-4, the mu-type subunit AP4M1 is directly involved in the recognition and binding of tyrosine-based sorting signals found in the cytoplasmic part of cargos. The adaptor protein complex 4 (AP-4) may also recognize other types of sorting signal. The sequence is that of AP-4 complex subunit mu-1 from Rattus norvegicus (Rat).